Here is a 219-residue protein sequence, read N- to C-terminus: Large ribosomal subunit protein uL3 (219 aa).

The protein belongs to the universal ribosomal protein uL3 family. Part of the 50S ribosomal subunit. Forms a cluster with proteins L14 and L19.

Its function is as follows. One of the primary rRNA binding proteins, it binds directly near the 3'-end of the 23S rRNA, where it nucleates assembly of the 50S subunit. This Salinispora tropica (strain ATCC BAA-916 / DSM 44818 / JCM 13857 / NBRC 105044 / CNB-440) protein is Large ribosomal subunit protein uL3.